A 245-amino-acid chain; its full sequence is MIRMSKRLGVILFVSCISINSFAKSMEADVNAVPEYNYDNIPYYENEGSLLVKMRLNGVFAHAKQKNLPAPTVPQPLPVGEFVKNGYGGDISTTIFFNNYFATELSLGFNVLRTKNSVLSNVSYNYGVGATPGKSKPLYMIPATITGQFHVAPFGGIRPYVGLGYHGSYMITQSSGIKIRNGNGFVGQIGLDFYAKDDTVINLDIKQYYLNPKIVYKPSLVGNQNITSRTKLNPLVVSIGIGFSF.

An N-terminal signal peptide occupies residues 1-23; sequence MIRMSKRLGVILFVSCISINSFA.

This sequence belongs to the OmpW/AlkL family.

The protein resides in the cell outer membrane. This is Putative outer membrane protein RBE_0022 from Rickettsia bellii (strain RML369-C).